Reading from the N-terminus, the 297-residue chain is 4-hydroxy-tetrahydrodipicolinate synthase (297 aa).

Threonine 49 provides a ligand contact to pyruvate. Catalysis depends on tyrosine 137, which acts as the Proton donor/acceptor. The active-site Schiff-base intermediate with substrate is lysine 166. Isoleucine 208 contacts pyruvate.

This sequence belongs to the DapA family. Homotetramer; dimer of dimers.

It localises to the cytoplasm. It catalyses the reaction L-aspartate 4-semialdehyde + pyruvate = (2S,4S)-4-hydroxy-2,3,4,5-tetrahydrodipicolinate + H2O + H(+). The protein operates within amino-acid biosynthesis; L-lysine biosynthesis via DAP pathway; (S)-tetrahydrodipicolinate from L-aspartate: step 3/4. Functionally, catalyzes the condensation of (S)-aspartate-beta-semialdehyde [(S)-ASA] and pyruvate to 4-hydroxy-tetrahydrodipicolinate (HTPA). The polypeptide is 4-hydroxy-tetrahydrodipicolinate synthase (Prosthecochloris aestuarii (strain DSM 271 / SK 413)).